A 256-amino-acid chain; its full sequence is Coiled-coil domain-containing protein 90B, mitochondrial (256 aa).

The N-terminal 42 residues, 1–42, are a transit peptide targeting the mitochondrion; that stretch reads MRNRWIWRFLRPECSGIRWISSPHGRLSPALRRGFLTTTTKS. A coiled-coil region spans residues 106 to 164; sequence AQQEITIQQLMAHLDSIRKDMVILEKSEFANLRAENEKMKIELDQVKQQLINETSRIRA. Residues 231–253 traverse the membrane as a helical segment; sequence TIRYLAASVFTCLAIALGFYRFW.

It belongs to the CCDC90 family. Interacts with MCU.

The protein localises to the mitochondrion membrane. In Rattus norvegicus (Rat), this protein is Coiled-coil domain-containing protein 90B, mitochondrial (Ccdc90b).